Consider the following 549-residue polypeptide: Probable glucuronosyltransferase Os01g0157700 (549 aa).

Residues 1-16 lie on the Cytoplasmic side of the membrane; sequence MDSEERSKKRLRLWSR. A helical; Signal-anchor for type II membrane protein transmembrane segment spans residues 17–37; it reads AVVHFSLCFAIGVFAALLPLA. At 38–549 the chain is on the lumenal side; the sequence is ATGATSIDSI…TPEEGKTKEG (512 aa). N-linked (GlcNAc...) asparagine glycans are attached at residues N112, N139, N214, N229, N240, N251, N264, N269, and N300. The disordered stretch occupies residues 232–252; it reads ETTWDSSSNTTQTTWDSSSNK. A compositionally biased stretch (basic and acidic residues) spans 350 to 363; it reads IEQATPEKESLTKG. Disordered stretches follow at residues 350-371, 413-432, and 441-524; these read IEQATPEKESLTKGDEEESHDM, EQETPEKENLTKGEEKESHD, and KIEE…KETH. 2 N-linked (GlcNAc...) asparagine glycosylation sites follow: N421 and N452. Composition is skewed to basic and acidic residues over residues 441–465, 472–496, and 503–524; these read KIEEQETPEKENLTKGDEKESHDMM, KIDEQETTEKESLTKGDEKESHDMM, and KIEEQETPEKESLTKGDEKETH.

It belongs to the glycosyltransferase 43 family.

It is found in the golgi apparatus membrane. Its function is as follows. Involved in the synthesis of glucuronoxylan hemicellulose in secondary cell walls. The protein is Probable glucuronosyltransferase Os01g0157700 of Oryza sativa subsp. japonica (Rice).